The sequence spans 426 residues: Cytochrome c biogenesis protein CcsB (426 aa).

3 consecutive transmembrane segments (helical) span residues 11–31, 69–89, and 159–179; these read LRVAIVLLFLIALASAVGTAI, SVWFLSLLAWLGLALILCSWR, and VGPLLVHTGLILLMLGAVWGV.

The protein belongs to the Ccs1/CcsB family. As to quaternary structure, may interact with CcsA.

Its subcellular location is the cellular thylakoid membrane. In terms of biological role, required during biogenesis of c-type cytochromes (cytochrome c6 and cytochrome f) at the step of heme attachment. This chain is Cytochrome c biogenesis protein CcsB, found in Synechococcus sp. (strain CC9902).